Consider the following 146-residue polypeptide: MALSQVSASLAFSLPNSGALKLATITNPTSTCRVHVPQLAGIRSTFASGSPLLPLKLSMTRRGGNRAASVSIRSEQSTEGSSGLDIWLGRGAMVGFAVAITVEISTGKGLLENFGVASPLPTVALAVTALVGVLAAVFIFQSSSKN.

A chloroplast-targeting transit peptide spans 1-73 (MALSQVSASL…GNRAASVSIR (73 aa)). Helical transmembrane passes span 84–104 (LDIW…TVEI) and 120–140 (LPTV…VFIF).

This sequence belongs to the ELIP/psbS family.

Its subcellular location is the plastid. The protein localises to the chloroplast thylakoid membrane. In terms of biological role, may be involved in non-photochemical quenching, a process that maintains the balance between dissipation and utilization of light energy to minimize generation of oxidizing molecules, thereby protecting the plant against photo-oxidative damage. May play a photoprotective role in the thylakoid membrane in response to light stress. The protein is Stress enhanced protein 1, chloroplastic of Arabidopsis thaliana (Mouse-ear cress).